A 252-amino-acid polypeptide reads, in one-letter code: Membrane protein insertase YidC (252 aa).

Positions M1–G20 are cleaved as a signal peptide. C21 carries the N-palmitoyl cysteine lipid modification. C21 carries the S-diacylglycerol cysteine lipid modification. Transmembrane regions (helical) follow at residues Y59–V79, L129–I149, F160–T180, I206–L226, and L228–M248.

It belongs to the OXA1/ALB3/YidC family. Type 2 subfamily.

Its subcellular location is the cell membrane. Required for the insertion and/or proper folding and/or complex formation of integral membrane proteins into the membrane. Involved in integration of membrane proteins that insert both dependently and independently of the Sec translocase complex, as well as at least some lipoproteins. This is Membrane protein insertase YidC from Oceanobacillus iheyensis (strain DSM 14371 / CIP 107618 / JCM 11309 / KCTC 3954 / HTE831).